The following is a 276-amino-acid chain: NADPH-dependent 7-cyano-7-deazaguanine reductase (276 aa).

Residue 83 to 85 (IES) participates in substrate binding. 85 to 86 (SK) is a binding site for NADPH. The active-site Thioimide intermediate is the Cys184. The active-site Proton donor is Asp191. 223–224 (HE) is a binding site for substrate. An NADPH-binding site is contributed by 252–253 (RG).

This sequence belongs to the GTP cyclohydrolase I family. QueF type 2 subfamily. As to quaternary structure, homodimer.

It is found in the cytoplasm. It carries out the reaction 7-aminomethyl-7-carbaguanine + 2 NADP(+) = 7-cyano-7-deazaguanine + 2 NADPH + 3 H(+). It functions in the pathway tRNA modification; tRNA-queuosine biosynthesis. Its function is as follows. Catalyzes the NADPH-dependent reduction of 7-cyano-7-deazaguanine (preQ0) to 7-aminomethyl-7-deazaguanine (preQ1). This Pseudomonas aeruginosa (strain LESB58) protein is NADPH-dependent 7-cyano-7-deazaguanine reductase.